We begin with the raw amino-acid sequence, 383 residues long: Outer membrane protein assembly factor BamB (383 aa).

Positions 1-23 (MMLLKRCNRRALVALAAVLLLAA) are cleaved as a signal peptide. Residue C24 is the site of N-palmitoyl cysteine attachment. Residue C24 is the site of S-diacylglycerol cysteine attachment.

The protein belongs to the BamB family. Part of the Bam complex.

Its subcellular location is the cell outer membrane. Part of the outer membrane protein assembly complex, which is involved in assembly and insertion of beta-barrel proteins into the outer membrane. The sequence is that of Outer membrane protein assembly factor BamB from Alkalilimnicola ehrlichii (strain ATCC BAA-1101 / DSM 17681 / MLHE-1).